Reading from the N-terminus, the 128-residue chain is Putative esterase aq_1494 (128 aa).

Residue aspartate 15 is part of the active site.

It belongs to the 4-hydroxybenzoyl-CoA thioesterase family.

The protein is Putative esterase aq_1494 of Aquifex aeolicus (strain VF5).